The primary structure comprises 187 residues: Large ribosomal subunit protein uL6 (187 aa).

This sequence belongs to the universal ribosomal protein uL6 family. Part of the 50S ribosomal subunit.

Its function is as follows. This protein binds to the 23S rRNA, and is important in its secondary structure. It is located near the subunit interface in the base of the L7/L12 stalk, and near the tRNA binding site of the peptidyltransferase center. This Roseiflexus castenholzii (strain DSM 13941 / HLO8) protein is Large ribosomal subunit protein uL6.